A 1016-amino-acid chain; its full sequence is Mediator of RNA polymerase II transcription subunit 5 (1016 aa).

This sequence belongs to the Mediator complex subunit 5 family. As to quaternary structure, component of the Mediator complex.

The protein localises to the nucleus. Component of the Mediator complex, a coactivator involved in the regulated transcription of nearly all RNA polymerase II-dependent genes. Mediator functions as a bridge to convey information from gene-specific regulatory proteins to the basal RNA polymerase II transcription machinery. Mediator is recruited to promoters by direct interactions with regulatory proteins and serves as a scaffold for the assembly of a functional preinitiation complex with RNA polymerase II and the general transcription factors. This chain is Mediator of RNA polymerase II transcription subunit 5 (nut1), found in Aspergillus terreus (strain NIH 2624 / FGSC A1156).